A 400-amino-acid chain; its full sequence is Nicotinate phosphoribosyltransferase (400 aa).

Histidine 220 carries the phosphohistidine; by autocatalysis modification.

Belongs to the NAPRTase family. In terms of processing, transiently phosphorylated on a His residue during the reaction cycle. Phosphorylation strongly increases the affinity for substrates and increases the rate of nicotinate D-ribonucleotide production. Dephosphorylation regenerates the low-affinity form of the enzyme, leading to product release.

It catalyses the reaction nicotinate + 5-phospho-alpha-D-ribose 1-diphosphate + ATP + H2O = nicotinate beta-D-ribonucleotide + ADP + phosphate + diphosphate. Its pathway is cofactor biosynthesis; NAD(+) biosynthesis; nicotinate D-ribonucleotide from nicotinate: step 1/1. Catalyzes the synthesis of beta-nicotinate D-ribonucleotide from nicotinate and 5-phospho-D-ribose 1-phosphate at the expense of ATP. This Salmonella choleraesuis (strain SC-B67) protein is Nicotinate phosphoribosyltransferase.